The sequence spans 135 residues: ATP synthase epsilon chain (135 aa).

It belongs to the ATPase epsilon chain family. F-type ATPases have 2 components, CF(1) - the catalytic core - and CF(0) - the membrane proton channel. CF(1) has five subunits: alpha(3), beta(3), gamma(1), delta(1), epsilon(1). CF(0) has three main subunits: a, b and c.

Its subcellular location is the cell inner membrane. Its function is as follows. Produces ATP from ADP in the presence of a proton gradient across the membrane. This is ATP synthase epsilon chain from Brucella anthropi (strain ATCC 49188 / DSM 6882 / CCUG 24695 / JCM 21032 / LMG 3331 / NBRC 15819 / NCTC 12168 / Alc 37) (Ochrobactrum anthropi).